Here is a 195-residue protein sequence, read N- to C-terminus: Imidazoleglycerol-phosphate dehydratase (195 aa).

Belongs to the imidazoleglycerol-phosphate dehydratase family.

Its subcellular location is the cytoplasm. It carries out the reaction D-erythro-1-(imidazol-4-yl)glycerol 3-phosphate = 3-(imidazol-4-yl)-2-oxopropyl phosphate + H2O. It functions in the pathway amino-acid biosynthesis; L-histidine biosynthesis; L-histidine from 5-phospho-alpha-D-ribose 1-diphosphate: step 6/9. The polypeptide is Imidazoleglycerol-phosphate dehydratase (Burkholderia mallei (strain NCTC 10247)).